Consider the following 492-residue polypeptide: Glutamate--cysteine ligase A, chloroplastic (492 aa).

A disulfide bond links Cys-156 and Cys-376.

It belongs to the carboxylate-amine ligase family. Glutamate--cysteine ligase type 2 subfamily. As to quaternary structure, homodimer or monomer when oxidized or reduced, respectively. The Cys-156-Cys-376 disulfide bridge is known to modulate the enzyme activity according to the redox status. The oxidized form constitutes the active enzyme.

It localises to the plastid. The protein resides in the chloroplast. The catalysed reaction is L-cysteine + L-glutamate + ATP = gamma-L-glutamyl-L-cysteine + ADP + phosphate + H(+). Its pathway is sulfur metabolism; glutathione biosynthesis; glutathione from L-cysteine and L-glutamate: step 1/2. The sequence is that of Glutamate--cysteine ligase A, chloroplastic (GSH1-1) from Oryza sativa subsp. indica (Rice).